The sequence spans 218 residues: Adenylate kinase (218 aa).

Residue 10 to 15 (GAGKGT) coordinates ATP. Residues 30–59 (STGDMFRAAMADQTDLGVKAKAFIDKGELV) form an NMP region. AMP-binding positions include T31, R36, 57 to 59 (ELV), 85 to 88 (GFPR), and Q92. The LID stretch occupies residues 126-164 (GRFICKTCGATYHKLYHPTQVEGTCDRCGGHVFFQREDD). R127 provides a ligand contact to ATP. Residues C130 and C133 each coordinate Zn(2+). 136-137 (TY) serves as a coordination point for ATP. Residues C150 and C153 each contribute to the Zn(2+) site. AMP-binding residues include R161 and R172. Q200 lines the ATP pocket.

Belongs to the adenylate kinase family. Monomer.

It localises to the cytoplasm. The catalysed reaction is AMP + ATP = 2 ADP. It participates in purine metabolism; AMP biosynthesis via salvage pathway; AMP from ADP: step 1/1. In terms of biological role, catalyzes the reversible transfer of the terminal phosphate group between ATP and AMP. Plays an important role in cellular energy homeostasis and in adenine nucleotide metabolism. This chain is Adenylate kinase, found in Latilactobacillus sakei subsp. sakei (strain 23K) (Lactobacillus sakei subsp. sakei).